Reading from the N-terminus, the 636-residue chain is 1-deoxy-D-xylulose-5-phosphate synthase (636 aa).

Thiamine diphosphate contacts are provided by residues histidine 75 and 116–118 (AHS). Aspartate 147 lines the Mg(2+) pocket. Thiamine diphosphate is bound by residues 148-149 (GA), asparagine 177, tyrosine 288, and glutamate 370. Position 177 (asparagine 177) interacts with Mg(2+).

This sequence belongs to the transketolase family. DXPS subfamily. In terms of assembly, homodimer. Mg(2+) serves as cofactor. It depends on thiamine diphosphate as a cofactor.

The enzyme catalyses D-glyceraldehyde 3-phosphate + pyruvate + H(+) = 1-deoxy-D-xylulose 5-phosphate + CO2. It functions in the pathway metabolic intermediate biosynthesis; 1-deoxy-D-xylulose 5-phosphate biosynthesis; 1-deoxy-D-xylulose 5-phosphate from D-glyceraldehyde 3-phosphate and pyruvate: step 1/1. Its function is as follows. Catalyzes the acyloin condensation reaction between C atoms 2 and 3 of pyruvate and glyceraldehyde 3-phosphate to yield 1-deoxy-D-xylulose-5-phosphate (DXP). In Ralstonia pickettii (strain 12J), this protein is 1-deoxy-D-xylulose-5-phosphate synthase.